The sequence spans 88 residues: U-scoloptoxin(XY)-Er1b (88 aa).

The first 24 residues, 1–24 (MASQVVLSFALVVVLAVFVGQVDS), serve as a signal peptide directing secretion. Residues 66 to 88 (RPELSPGALDDSSEEKDNEASLA) are disordered. A propeptide spanning residues 79 to 88 (EEKDNEASLA) is cleaved from the precursor.

It belongs to the scoloptoxin-XY family. Contains 3 disulfide bonds. Expressed by the venom gland.

It localises to the secreted. This Ethmostigmus rubripes (Giant centipede) protein is U-scoloptoxin(XY)-Er1b.